The sequence spans 207 residues: Peptidyl-tRNA hydrolase (207 aa).

TRNA is bound at residue Y14. Residue H19 is the Proton acceptor of the active site. Y64, N66, and N112 together coordinate tRNA.

Belongs to the PTH family. Monomer.

It localises to the cytoplasm. It carries out the reaction an N-acyl-L-alpha-aminoacyl-tRNA + H2O = an N-acyl-L-amino acid + a tRNA + H(+). Its function is as follows. Hydrolyzes ribosome-free peptidyl-tRNAs (with 1 or more amino acids incorporated), which drop off the ribosome during protein synthesis, or as a result of ribosome stalling. Catalyzes the release of premature peptidyl moieties from peptidyl-tRNA molecules trapped in stalled 50S ribosomal subunits, and thus maintains levels of free tRNAs and 50S ribosomes. The protein is Peptidyl-tRNA hydrolase of Rhodopseudomonas palustris (strain BisB5).